The primary structure comprises 1967 residues: RQC trigger complex helicase SLH1 (1967 aa).

Residues 297–485 form the Helicase ATP-binding 1 domain; the sequence is PVAYKTNENM…FLGVNRQIGM (189 aa). An ATP-binding site is contributed by 310–317; sequence APTGAGKT. Positions 427–430 match the DEVH box motif; the sequence is DEVH. The Helicase C-terminal 1 domain maps to 516 to 735; the sequence is NIDKVAYDKL…NVDEAIEWLG (220 aa). Positions 795 to 1100 constitute an SEC63 1 domain; it reads AKDLGRVSSD…GCESTHAISF (306 aa). The region spanning 1149–1324 is the Helicase ATP-binding 2 domain; sequence YTLYNTNENA…WLGVKDHGLY (176 aa). Position 1162–1169 (1162–1169) interacts with ATP; sequence SPTGSGKT. Residues 1266–1269 carry the DEAH box motif; it reads DEIH. Residues 1355 to 1550 enclose the Helicase C-terminal 2 domain; it reads MNKPVFMAIK…SLHKVLDDHL (196 aa). An SEC63 2 domain is found at 1626–1776; the sequence is ATPFLSISSY…MMQCIKQGYW (151 aa).

This sequence belongs to the helicase family. SKI2 subfamily. Component of the RQT (ribosome quality control trigger) complex, composed of SLH1, CUE3, and RQT4. Interacts with CUE3. Interacts with RQT4. Interacts with HEL2. Associates with translating ribosomes.

The protein localises to the cytoplasm. The protein resides in the cytosol. The catalysed reaction is ATP + H2O = ADP + phosphate + H(+). Functionally, involved in activation of the ribosome quality control (RQC) pathway, a pathway that degrades nascent peptide chains during problematic translation. Drives the splitting of stalled ribosomes that are polyubiquitinated in a HEL2-dependent manner, as part of the ribosome quality control trigger (RQT) complex. Also represses the translation of non-poly(A) mRNAs together with SKI2. May block translation by inhibiting translation initiation factor 5B (FUN12) action on mRNAs lacking a 3' poly(A) structure. Involved in antiviral defense, preventing L-A dsRNA virus propagation by specifically blocking translation of viral mRNAs. The polypeptide is RQC trigger complex helicase SLH1 (Saccharomyces cerevisiae (strain ATCC 204508 / S288c) (Baker's yeast)).